The primary structure comprises 167 residues: NAD(P)H-quinone oxidoreductase subunit I, chloroplastic (167 aa).

4Fe-4S ferredoxin-type domains lie at 55 to 84 (GRIH…VDWK) and 95 to 124 (LNYS…MTEE). Positions 64, 67, 70, 74, 104, 107, 110, and 114 each coordinate [4Fe-4S] cluster.

This sequence belongs to the complex I 23 kDa subunit family. NDH is composed of at least 16 different subunits, 5 of which are encoded in the nucleus. [4Fe-4S] cluster is required as a cofactor.

The protein localises to the plastid. The protein resides in the chloroplast thylakoid membrane. It carries out the reaction a plastoquinone + NADH + (n+1) H(+)(in) = a plastoquinol + NAD(+) + n H(+)(out). The catalysed reaction is a plastoquinone + NADPH + (n+1) H(+)(in) = a plastoquinol + NADP(+) + n H(+)(out). Its function is as follows. NDH shuttles electrons from NAD(P)H:plastoquinone, via FMN and iron-sulfur (Fe-S) centers, to quinones in the photosynthetic chain and possibly in a chloroplast respiratory chain. The immediate electron acceptor for the enzyme in this species is believed to be plastoquinone. Couples the redox reaction to proton translocation, and thus conserves the redox energy in a proton gradient. This is NAD(P)H-quinone oxidoreductase subunit I, chloroplastic from Draba nemorosa (Woodland whitlowgrass).